A 615-amino-acid chain; its full sequence is Alpha-1,3-galactosidase B (615 aa).

Positions 1 to 23 are cleaved as a signal peptide; that stretch reads MRTFLSLKTCLLSALLLCVNSIA. PbH1 repeat units lie at residues 282-313, 423-445, 446-467, 478-500, 520-541, and 543-573; these read SKNISFNDVHIIPNTSKKRVLSGHDDGFHFMG, TPDAEIRNCHFGSCRARGLLVST, PGKVIIENNVFESSGSAILIAG, VKDVLIRNNDFRYPCNSSIYQFC, HRNIRIMDNTFHLFDYPILFAR, and VNGLTFSSNTLIRDTTYQPYHYRKEGITLEA.

It belongs to the glycosyl hydrolase 110 family. B subfamily.

It carries out the reaction Hydrolysis of terminal, non-reducing branched (1-&gt;3)-alpha-D-galactosidic residues, producing free D-galactose.. The enzyme catalyses Hydrolysis of terminal, non-reducing linear (1-&gt;3)-alpha-D-galactosidic residues, producing free D-galactose.. The catalysed reaction is Hydrolysis of terminal, non-reducing alpha-D-galactose residues in alpha-D-galactosides, including galactose oligosaccharides, galactomannans and galactolipids.. Functionally, alpha-galactosidase. Removes both branched alpha-1,3-linked galactose residues of blood group B antigens and linear alpha-1,3-linked galactose structures. This is Alpha-1,3-galactosidase B (glaB) from Bacteroides thetaiotaomicron (strain ATCC 29148 / DSM 2079 / JCM 5827 / CCUG 10774 / NCTC 10582 / VPI-5482 / E50).